Here is a 3902-residue protein sequence, read N- to C-terminus: MGTADVYEQHKNQEEDMLTTERLKKGYQVPVTHYELQSLIFNASENKLLRLDRAPRRTYCMISSIVHRRGEYHMNFDSNRKVAKGEMPRFAKIRFKRILEDRVKFFSALFRGTPLQYLQKKVPYYRRKELLLLEFYDYQIRYDRAIWCVKLVSILGFNCSAKAQKKALLDLATLEWSQACGKVTYYLLLALRKTYKKSRAAFRESVKMWYYMTRFMMYMFQDGVVDKHEFLNDLTEMFNVFFIRGSLANAKILELFMEYYIFFLDDLSSSLILARRASSLLCKALGLLSEINEAYTKTQVYKNENKHEFMGHQDVWTIDAQPKFDFEDYNRDHKEFIDPDDFFRFVDELPDAAYFEDYEDKTAEQVAEEELQTMEAPRRARNYIYSALKSVKTPVNDQIPVDLGDELYIPSDVESLTSPEPEEDPEEGPEEDPRSQSVPSPTFPAGPVSMEEAIPAYWRARGPVLQTVPQPAPQPVPKPVQQTVPKPVPRPPPRNLNIKSEQVDPEYEKNFGNPVKSKNFNINIKAEPMDYDEYSTEPPQPLQPPQTFQQRPKSPEKEKAPEPAAEPPRWTLEELPKNFLSKNLEVPAPWTRPRENPIERKRAYNLLCAKRFPVKEDVFEPFKDPDSPDGSRPASPIEPIPVKKLHKTPPKKVMTDDDEFGHIPAQKRKINPKLANGKYSETLFVYYLINGGVAFDPKHDGDEMDFSNPTPPEAPPPPPPVEFETSPSASPAPDTDKEDEDGKSKEGGDKAAEKSTDKPAEEKEASEKEKTGEKKDGDKPTEEKSKKGEKADGKKAVDEHLNDLIIPMDVEAEAATKRNSATNSKDDEAEDANKVAGDAPVVEATHAAGTSEKKPEAEVTPIETNDVEMESVDPATNKESTSDSTAEKSSDSQEPMEVDDPQKKLPSPAADKAGDDASKKTKEGKKPDTPAIELVDLEALDDIPLPTDDLMLPEEDEIQVIEKPKHPDADFCEVVEVVEKDKDKTPEKATEGEKEAEKDAEKLPEPAPVVESVPEPVKTPEKPKTPEPPRLYTAEEIEQLKKDKRRQRMLDRLTDAFKIQMESDKKYEENNIHPSFKVYDQSRSFRRPLHLLSSMVQYLAFRTPESFVWNNLEVPRPDKCHKILPQLCGSPLDHLPCELHELPVMEGNDGHVEHLRLRHHEIVRRSQAADENWLPGGADVLQYGRIIDACVDVIGLMDCINVERPNSIFKVSERLFNFREKFAKEEALLRIKLMFKWCISEEREGSFRPVYCARMLEYGLNRSDDGLIGGWQIMDLFFNFMATEGPKPGMANYQAKFDACAGIMIEMIRHKLFTVADILRELEKDLDIDYTLPLMARQRKQKMPKISKKEKTPEEPDNTKLIHFTTEHTPKRLFMGRKMDLLERMIIMLPQFGNNKDSDEYKIRNQLLFGLRPSENIYFRRAKTICQGICKEFDSKSYIEFNDYVTAHKKLNQSRLDDILRQFRAQTYHDQHVILEKIVIHLTENIGSFLEKKNGHLPAPEVVNIICEMYEYSMDITSIFDFFEVLHPYLKAVDEKVASFEMDLVPDMYHTEIAYIFVSFFMKHYQRFLLHKRNNHIVNQLYYSVRKMMMDKTRFITCWGRVIAIFVNHIRPVLIDGCFRIIHIEGNEREFARAHPNKRPFNLECSYFNEEFAGSKLSLRGATMRYDSFADMKWIVDNLKVTVKRKNSKPRTPNRYSFVIRAFMEARKHGQNFDRINELANYCANVTANDPPLSEYWIGAIKGLCCLCIDDSSQLFKEMAKKIDISDCSTHYSLSTFITCLAGKAAFYIPRLLHKLTEEVFSQMLHNDGRLTSHKTKDVKRKSANKTTETRTLSEAEPGVCLSLLIIAGLCCPGDEPFGLSVHYRGIEKKKKRFRQTADERIMHMFHWLEMDKSMFRTLASISKLLEALQSRCRDANLVLPQSFQLKHPIVDPNHPPPHEKAPYRPQFLFNIAKAVFFTICEQDWVTIRMYQFVRINKMEPFNQEKLKTNCLGQQLLRISLRRKTERSNVHSLFEAHKISKKATVDKVLSFMNLWNFRATLFDLMLMIKEISPDGNTRHAQQGAIAADALMSEIGKCCRDMFLAAYKADAKMPNVKKLMDFRFGDISKYWLLAPLVRMCPKPINIPPQYANTQVQTVAAKFLREASALMDTPPTTTPKERLLQCSWAMSKLPFINMILTCLACEKTQSGKDTFLNSVYQQLQREVFRDHNKRSNWTNRPEHRDCTVLRVNLIAYMYKEILKPTHVEVWGLLLYQLMFHGIINPSRERYVFENCYDMLQHMVLWTLVNGDNMNSHDRYGSIRVRWPNYAGLMKKIRKEIQDRHVHPSRTCLLRFLPIGKLQTSTISYKKYHKRTIRPSATKSKKFMSNEGIRSGKYVYLPEEKVKTNAYDHMKNIPDGIQKGGWKFRMFQTTRLDKVAKSALHQLRAKIPHTHIGEFKRPCNIMLDNMSEDFYLRPPEVEITKTVEPVADDEETAAVKKPEEETAEKKKDEAKKADEKTTKADDEKKKDETADAKKDNEKQKEEKDKPEDSAKAKTDDVTAKDTEKDTAAPTDAAKAAAAPVAAAPDANKEMDTSTPKPAPVTRETSTTRGRGGGRKRNSGGRAAGGSRAKRTNSRANANAETAAAAETSSTTKAGPSGGGSSNYHAAMRANQPPMSNGSSDETKANIRNLLNRKQEKRNSLADANAAAAVAAAAAAAAAAAGNIAPALAPIVQPGIPSAGASSTMPGVPPQQQPHPGMQHQSGMQHQGMGAGMGGMNPTMHAPPPYSSSSMNPFANQPHFAAPNQVPITNMAHRSTAAVTPEERKRIMEEQMHQKLAQQQLLIENQNRQREAREREAREHQERLHKIREEQMQKEAKIREEQMQLERQRAIEENNRIMEEQRILREKEEARRRMEEEQRRREEEARLAYHVEQERIRKEQERQAILEAERLKREEERERERQRLEQERLQREMEEKARREKEEQARIERERLERERVAREALAAQQAQQAQQAQQAQQAQQQRHRAMLEQQQRQQMINQQQQQQAPYGQQPPQGQPPSYQQSSYQNPSGYQQGQQSGQNQPPNYQQTSHTNPAIQQTQQPPAYQQDNAQMHMQNRQQQPGQQYGNQPQQQQSQQAQQGQYPQQYPQQLSQNQQMNQQNQQRNPFGAQPEMQIGGPKVLMQAKPDEAHAQQYQHTQAQLALSQMEKEKQYLKAKNLQAGQAAGQQQPRFGENPQQNAPGFNGNLPYPQQQQQQPQQPGTSQIPNTTPTRPANPMQGQQQQAGMQNYQNQPVLGQPGPMQPGGQAGQQQQNQFQRQGMHTTPTKNDMAMRQGQMGGQMGQQQGQMGQQMQNRPAQGLNQQSQGFQQQGGQQSAQASFNQPQNQFSGGQQQQQMGQNQGQNLQQGQNQFGRQAAPNQENFQQQPGFNQNAAGQNYQRPEQQQQSQNQWNQLNQQMRPQQPQQPSQQQQNLPFGRTEQSQQFQQQQQQPQHQQQNKPAMGQQGFNYQGQQQGQGFDQSSQQTQQHPNPHQQQGHMQQTHQQNASQQQQQYNQAQQQSQQQGNQFPGFSGSSNQARASNILNQSMEDAGLNQGFSSGNTSNQQASSTNQQGNYGMQQGQQNPMHGQMHHQQGQQNQNQQQRPGMGQQGMGQQGMGQQGGMGQSGRGQPGMGGQSAMGQHQHGMGRPTMGQPGMQQSGMQQQHGMQQQQPGAQQSGLQQAGMQQQHGGIGMGGMQQQGRNNYGSMGQQGQQSGQQQAQQHQQMSQQAQPRQMPGGGVQLPPYSMGQQQQTQQQQPNQQQMDHLRRQQQMQQMARQQAMQQQQQGGVQQGQPQMQGYGNQGQQQQQQFPQMQQHRGQGQQGHGMGGAGQQHQQVPQQQQNQYFQPQQQQDQRMQQQPGGQQQQQQGQSGQQQNNQHYNNMGQFPNQQQY.

10 disordered regions span residues glutamate 414–proline 576, phenylalanine 619–leucine 674, alanine 694–leucine 940, valine 977–proline 1029, threonine 1812–arginine 1831, threonine 2463–glutamine 2675, alanine 2719–methionine 2771, arginine 2876–glutamine 3151, leucine 3195–glutamine 3549, and alanine 3563–tyrosine 3902. Acidic residues predominate over residues glutamate 420–glutamate 430. The span at proline 709–valine 721 shows a compositional bias: pro residues. 4 stretches are compositionally biased toward basic and acidic residues: residues glutamate 740–asparagine 802, lysine 912–aspartate 928, valine 977–proline 1004, and lysine 1018–glutamate 1027. The segment covering threonine 1812–alanine 1824 has biased composition (basic residues). The required for nuclear localization stretch occupies residues glutamine 2409 to tyrosine 3902. Residues alanine 2474–threonine 2547 are compositionally biased toward basic and acidic residues. A coiled-coil region spans residues glutamate 2480 to lysine 2526. Composition is skewed to low complexity over residues alanine 2548–aspartate 2566, serine 2614–threonine 2632, and proline 2734–glycine 2748. Basic and acidic residues predominate over residues arginine 2876–arginine 2979. 4 stretches are compositionally biased toward low complexity: residues glutamate 2980–glutamine 3001, glutamine 3010–proline 3143, glutamine 3196–glutamine 3205, and proline 3226–proline 3236. Positions glycine 3237–arginine 3248 are enriched in polar residues. Composition is skewed to low complexity over residues alanine 3250–glycine 3275, glycine 3284–glycine 3295, and glycine 3317–glutamine 3389. Over residues alanine 3391 to glycine 3409 the composition is skewed to polar residues. Low complexity-rich tracts occupy residues glutamine 3410–asparagine 3446, glutamine 3454–glutamine 3539, and serine 3570–methionine 3619. Positions glycine 3620–serine 3649 are enriched in gly residues. Composition is skewed to low complexity over residues methionine 3663 to histidine 3700, glutamine 3710 to glutamine 3742, and glutamine 3760 to glutamine 3830. Residues glycine 3831–glycine 3841 are compositionally biased toward gly residues. Low complexity predominate over residues glutamine 3842–glutamine 3888. Over residues histidine 3889–tyrosine 3902 the composition is skewed to polar residues.

It belongs to the Mediator complex subunit 12 family. Component of the Mediator complex.

It is found in the nucleus. Its function is as follows. Component of the Mediator complex, a coactivator involved in regulated gene transcription of nearly all RNA polymerase II-dependent genes. Mediator functions as a bridge to convey information from gene-specific regulatory proteins to the basal RNA polymerase II transcription machinery. Mediator is recruited to promoters by direct interactions with regulatory proteins and serves as a scaffold for the assembly of a functional preinitiation complex with RNA polymerase II and the general transcription factors. The sequence is that of Mediator of RNA polymerase II transcription subunit 12 (dpy-22) from Caenorhabditis briggsae.